A 229-amino-acid chain; its full sequence is Type III pantothenate kinase (229 aa).

An ATP-binding site is contributed by 7–14 (DVGNSSVD). Substrate-binding positions include Tyr78 and 85–88 (GTDR). Asp87 (proton acceptor) is an active-site residue. Thr110 serves as a coordination point for ATP. Residue Thr161 participates in substrate binding.

Belongs to the type III pantothenate kinase family. In terms of assembly, homodimer. The cofactor is NH4(+). K(+) serves as cofactor.

It is found in the cytoplasm. It catalyses the reaction (R)-pantothenate + ATP = (R)-4'-phosphopantothenate + ADP + H(+). It functions in the pathway cofactor biosynthesis; coenzyme A biosynthesis; CoA from (R)-pantothenate: step 1/5. Functionally, catalyzes the phosphorylation of pantothenate (Pan), the first step in CoA biosynthesis. This Aquifex aeolicus (strain VF5) protein is Type III pantothenate kinase.